The primary structure comprises 345 residues: 3-dehydroquinate synthase (345 aa).

NAD(+) contacts are provided by residues 86–90 (GALLD), 110–111 (TT), Lys-123, and Lys-132. Zn(2+) is bound by residues Glu-165, His-229, and His-243.

It belongs to the sugar phosphate cyclases superfamily. Dehydroquinate synthase family. NAD(+) is required as a cofactor. It depends on Co(2+) as a cofactor. Zn(2+) serves as cofactor.

It localises to the cytoplasm. The catalysed reaction is 7-phospho-2-dehydro-3-deoxy-D-arabino-heptonate = 3-dehydroquinate + phosphate. Its pathway is metabolic intermediate biosynthesis; chorismate biosynthesis; chorismate from D-erythrose 4-phosphate and phosphoenolpyruvate: step 2/7. Catalyzes the conversion of 3-deoxy-D-arabino-heptulosonate 7-phosphate (DAHP) to dehydroquinate (DHQ). The protein is 3-dehydroquinate synthase of Pyrobaculum aerophilum (strain ATCC 51768 / DSM 7523 / JCM 9630 / CIP 104966 / NBRC 100827 / IM2).